The chain runs to 1372 residues: DNA-directed RNA polymerase subunit beta (1372 aa).

It belongs to the RNA polymerase beta chain family. As to quaternary structure, the RNAP catalytic core consists of 2 alpha, 1 beta, 1 beta' and 1 omega subunit. When a sigma factor is associated with the core the holoenzyme is formed, which can initiate transcription.

The catalysed reaction is RNA(n) + a ribonucleoside 5'-triphosphate = RNA(n+1) + diphosphate. Functionally, DNA-dependent RNA polymerase catalyzes the transcription of DNA into RNA using the four ribonucleoside triphosphates as substrates. The protein is DNA-directed RNA polymerase subunit beta of Rickettsia bellii (strain RML369-C).